We begin with the raw amino-acid sequence, 481 residues long: CUGBP Elav-like family member 6 (481 aa).

Low complexity predominate over residues 1 to 12; that stretch reads MAAAPGGSAQPA. A disordered region spans residues 1–34; sequence MAAAPGGSAQPAGPGPRLGFSTADSGVGMSGLNP. RRM domains lie at 46–127, 134–214, and 396–474; these read IKLF…PAAS, RKLF…LADT, and CNLF…LKRP.

The protein belongs to the CELF/BRUNOL family. As to expression, expressed mainly in kidney, brain and testis and present in other tissues albeit at lower levels. Also expressed in fetal kidney.

It is found in the nucleus. Its subcellular location is the cytoplasm. Functionally, RNA-binding protein implicated in the regulation of pre-mRNA alternative splicing. Mediates exon inclusion and/or exclusion in pre-mRNA that are subject to tissue-specific and developmentally regulated alternative splicing. Specifically activates exon 5 inclusion of TNNT2 in a muscle-specific splicing enhancer (MSE)-dependent manner. Promotes also exon exclusion of INSR pre-mRNA. The chain is CUGBP Elav-like family member 6 (CELF6) from Homo sapiens (Human).